A 624-amino-acid chain; its full sequence is (-)-beta-phellandrene synthase 3, chloroplastic (624 aa).

The N-terminal 48 residues, 1–48, are a transit peptide targeting the chloroplast; it reads MAIVSSVPLASKSCLHKSLISSIHKLKPFCRTIPTLGMSRPGKYVMPS. Mg(2+) is bound by residues Asp375, Asp379, and Asp527. The short motif at 375–379 is the DDXXD motif element; it reads DDMYD.

Belongs to the terpene synthase family. Tpsd subfamily. Requires Mg(2+) as cofactor. Mn(2+) serves as cofactor.

The protein localises to the plastid. It localises to the chloroplast. The enzyme catalyses (2E)-geranyl diphosphate = (-)-beta-phellandrene + diphosphate. The protein operates within terpene metabolism; oleoresin biosynthesis. Functionally, terpene synthase (TPS) involved in the biosynthesis of monoterpene natural products included in conifer oleoresin secretions and volatile emissions; these compounds contribute to biotic and abiotic stress defense against herbivores and pathogens. Catalyzes the conversion of (2E)-geranyl diphosphate (GPP) to (-)-beta-phellandrene. This is (-)-beta-phellandrene synthase 3, chloroplastic from Picea sitchensis (Sitka spruce).